The primary structure comprises 344 residues: Protein RecA (344 aa).

ATP is bound at residue 65-72 (GPESSGKT).

It belongs to the RecA family.

The protein resides in the cytoplasm. Can catalyze the hydrolysis of ATP in the presence of single-stranded DNA, the ATP-dependent uptake of single-stranded DNA by duplex DNA, and the ATP-dependent hybridization of homologous single-stranded DNAs. It interacts with LexA causing its activation and leading to its autocatalytic cleavage. The sequence is that of Protein RecA from Nitratiruptor sp. (strain SB155-2).